A 248-amino-acid chain; its full sequence is 3-deoxy-manno-octulosonate cytidylyltransferase (248 aa).

The protein belongs to the KdsB family.

The protein resides in the cytoplasm. It catalyses the reaction 3-deoxy-alpha-D-manno-oct-2-ulosonate + CTP = CMP-3-deoxy-beta-D-manno-octulosonate + diphosphate. It functions in the pathway nucleotide-sugar biosynthesis; CMP-3-deoxy-D-manno-octulosonate biosynthesis; CMP-3-deoxy-D-manno-octulosonate from 3-deoxy-D-manno-octulosonate and CTP: step 1/1. The protein operates within bacterial outer membrane biogenesis; lipopolysaccharide biosynthesis. Functionally, activates KDO (a required 8-carbon sugar) for incorporation into bacterial lipopolysaccharide in Gram-negative bacteria. In Shigella boydii serotype 18 (strain CDC 3083-94 / BS512), this protein is 3-deoxy-manno-octulosonate cytidylyltransferase.